The chain runs to 127 residues: uncharacterized protein (127 aa).

Residues 1 to 17 show a composition bias toward polar residues; that stretch reads MQGSVQIQKGNISSSYT. Residues 1–36 form a disordered region; the sequence is MQGSVQIQKGNISSSYTPEKHPSHPTSANGSMSPKR.

This is an uncharacterized protein from Treponema pallidum (strain Nichols).